The sequence spans 299 residues: Protease HtpX homolog (299 aa).

Transmembrane regions (helical) follow at residues Leu-19 to Phe-39 and Trp-41 to Tyr-61. His-146 serves as a coordination point for Zn(2+). Glu-147 is an active-site residue. Zn(2+) is bound at residue His-150. The next 2 helical transmembrane spans lie at Ile-156–Phe-176 and Ile-198–Ile-218. Zn(2+) is bound at residue Glu-227.

It belongs to the peptidase M48B family. Requires Zn(2+) as cofactor.

The protein resides in the cell membrane. The polypeptide is Protease HtpX homolog (Caldanaerobacter subterraneus subsp. tengcongensis (strain DSM 15242 / JCM 11007 / NBRC 100824 / MB4) (Thermoanaerobacter tengcongensis)).